A 215-amino-acid chain; its full sequence is Probable phosphoglycerate mutase GpmB (215 aa).

Residues 8 to 15 (RHGETQWN), 21 to 22 (QG), Arg-58, Lys-60, 82 to 85 (ELDM), 104 to 105 (RR), and 151 to 152 (GI) contribute to the substrate site. His-9 (tele-phosphohistidine intermediate) is an active-site residue. Glu-82 serves as the catalytic Proton donor/acceptor.

This sequence belongs to the phosphoglycerate mutase family. GpmB subfamily.

The enzyme catalyses (2R)-2-phosphoglycerate = (2R)-3-phosphoglycerate. It participates in carbohydrate degradation; glycolysis; pyruvate from D-glyceraldehyde 3-phosphate: step 3/5. This Salmonella agona (strain SL483) protein is Probable phosphoglycerate mutase GpmB.